A 264-amino-acid polypeptide reads, in one-letter code: Ribosomal protein L11 methyltransferase (264 aa).

S-adenosyl-L-methionine-binding residues include Thr116, Gly137, Asp159, and Asn200.

Belongs to the methyltransferase superfamily. PrmA family.

Its subcellular location is the cytoplasm. It carries out the reaction L-lysyl-[protein] + 3 S-adenosyl-L-methionine = N(6),N(6),N(6)-trimethyl-L-lysyl-[protein] + 3 S-adenosyl-L-homocysteine + 3 H(+). Functionally, methylates ribosomal protein L11. The polypeptide is Ribosomal protein L11 methyltransferase (Thermotoga neapolitana).